The primary structure comprises 345 residues: Flotillin-like protein FloA 1 (345 aa).

A helical membrane pass occupies residues 26–46; the sequence is LLLLVGVFLALFFAAVLGFFF.

It belongs to the flotillin-like FloA family. As to quaternary structure, homooligomerizes.

Its subcellular location is the cell membrane. The protein localises to the membrane raft. Found in functional membrane microdomains (FMM) that may be equivalent to eukaryotic membrane rafts. FMMs are highly dynamic and increase in number as cells age. Flotillins are thought to be important factors in membrane fluidity. This Rhodopirellula baltica (strain DSM 10527 / NCIMB 13988 / SH1) protein is Flotillin-like protein FloA 1.